The following is a 628-amino-acid chain: Junctophilin-4 (628 aa).

At 1–606 (MSPGGKFDFD…RPAQPGAANP (606 aa)) the chain is on the cytoplasmic side. MORN repeat units lie at residues 50-72 (LGVF…KREG), 74-95 (GVER…KGRS), 96-117 (GVWE…FQDG), 118-140 (YGTE…KRHG), 141-163 (YGVR…RTSL), and 164-186 (DSGH…EGGS). Disordered stretches follow at residues 158 to 214 (PRRT…RTPA) and 231 to 276 (GGRR…LIEG). The segment covering 170–179 (PPTPPPPLPL) has biased composition (pro residues). Low complexity-rich tracts occupy residues 231 to 241 (GGRRSSLGSKR) and 253 to 272 (GSTG…APPA). MORN repeat units lie at residues 317–339 (YGRT…RLVH) and 340–362 (GGRV…KVDR). The tract at residues 415 to 602 (DLQPMLEAPG…AATERPAQPG (188 aa)) is disordered. Positions 432–443 (EGSDTEPLDEDS) are enriched in acidic residues. Low complexity-rich tracts occupy residues 453-467 (PSEG…PASS) and 528-541 (GSPL…SSGS). A helical; Anchor for type IV membrane protein transmembrane segment spans residues 607–628 (LVVGAVALLDLSLAFLFSQLLT).

Belongs to the junctophilin family.

It localises to the cell membrane. The protein resides in the endoplasmic reticulum membrane. Its function is as follows. Junctophilins contribute to the formation of junctional membrane complexes (JMCs) which link the plasma membrane with the endoplasmic or sarcoplasmic reticulum in excitable cells. Provides a structural foundation for functional cross-talk between the cell surface and intracellular calcium release channels. JPH4 is brain-specific and appears to have an active role in certain neurons involved in motor coordination and memory. The protein is Junctophilin-4 (JPH4) of Homo sapiens (Human).